A 104-amino-acid polypeptide reads, in one-letter code: Large ribosomal subunit protein bL28 (104 aa).

Belongs to the bacterial ribosomal protein bL28 family.

This chain is Large ribosomal subunit protein bL28, found in Wolbachia pipientis wMel.